A 150-amino-acid chain; its full sequence is L-alanine exporter AlaE (150 aa).

4 helical membrane passes run phenylalanine 17–methionine 37, leucine 48–leucine 68, leucine 86–alanine 106, and isoleucine 111–tyrosine 131.

Belongs to the AlaE exporter family.

It localises to the cell inner membrane. In terms of biological role, exports L-alanine. This Vibrio cholerae serotype O1 (strain ATCC 39315 / El Tor Inaba N16961) protein is L-alanine exporter AlaE.